Here is a 166-residue protein sequence, read N- to C-terminus: Mitochondrial fission process protein 1 (166 aa).

The next 3 helical transmembrane spans lie at 33 to 53 (SLVK…YVAA), 78 to 98 (AIAA…IPGF), and 125 to 145 (TVTC…DSFV).

The protein belongs to the MTFP1 family.

The protein resides in the mitochondrion inner membrane. Involved in the mitochondrial division probably by regulating membrane fission. Loss-of-function leads to apoptosis. The sequence is that of Mitochondrial fission process protein 1 (mtp-18) from Caenorhabditis elegans.